The following is a 504-amino-acid chain: Probable cytosol aminopeptidase (504 aa).

Residues lysine 274 and aspartate 279 each contribute to the Mn(2+) site. The active site involves lysine 286. Residues aspartate 297, aspartate 356, and glutamate 358 each contribute to the Mn(2+) site. Arginine 360 is a catalytic residue.

It belongs to the peptidase M17 family. The cofactor is Mn(2+).

The protein localises to the cytoplasm. The enzyme catalyses Release of an N-terminal amino acid, Xaa-|-Yaa-, in which Xaa is preferably Leu, but may be other amino acids including Pro although not Arg or Lys, and Yaa may be Pro. Amino acid amides and methyl esters are also readily hydrolyzed, but rates on arylamides are exceedingly low.. It carries out the reaction Release of an N-terminal amino acid, preferentially leucine, but not glutamic or aspartic acids.. Functionally, presumably involved in the processing and regular turnover of intracellular proteins. Catalyzes the removal of unsubstituted N-terminal amino acids from various peptides. The polypeptide is Probable cytosol aminopeptidase (Blochmanniella floridana).